The chain runs to 419 residues: UDP-N-acetylglucosamine 1-carboxyvinyltransferase (419 aa).

A phosphoenolpyruvate-binding site is contributed by 22–23 (KN). Residue Arg-91 coordinates UDP-N-acetyl-alpha-D-glucosamine. The active-site Proton donor is Cys-115. Cys-115 is subject to 2-(S-cysteinyl)pyruvic acid O-phosphothioketal. Residues 120 to 124 (RPVDL), 160 to 163 (KVSV), Asp-305, and Ile-327 contribute to the UDP-N-acetyl-alpha-D-glucosamine site.

This sequence belongs to the EPSP synthase family. MurA subfamily.

The protein localises to the cytoplasm. It catalyses the reaction phosphoenolpyruvate + UDP-N-acetyl-alpha-D-glucosamine = UDP-N-acetyl-3-O-(1-carboxyvinyl)-alpha-D-glucosamine + phosphate. The protein operates within cell wall biogenesis; peptidoglycan biosynthesis. Cell wall formation. Adds enolpyruvyl to UDP-N-acetylglucosamine. The protein is UDP-N-acetylglucosamine 1-carboxyvinyltransferase of Klebsiella pneumoniae subsp. pneumoniae (strain ATCC 700721 / MGH 78578).